Here is a 494-residue protein sequence, read N- to C-terminus: Cysteine--tRNA ligase (494 aa).

Zn(2+) is bound at residue Cys-29. A 'HIGH' region motif is present at residues 31-41; that stretch reads VTVYDHCHIGH. The Zn(2+) site is built by Cys-209, His-234, and Glu-238. Residues 266-270 carry the 'KMSKS' region motif; it reads KMSKS. Lys-269 is a binding site for ATP.

This sequence belongs to the class-I aminoacyl-tRNA synthetase family. In terms of assembly, monomer. The cofactor is Zn(2+).

The protein resides in the cytoplasm. The enzyme catalyses tRNA(Cys) + L-cysteine + ATP = L-cysteinyl-tRNA(Cys) + AMP + diphosphate. The sequence is that of Cysteine--tRNA ligase from Geotalea daltonii (strain DSM 22248 / JCM 15807 / FRC-32) (Geobacter daltonii).